We begin with the raw amino-acid sequence, 338 residues long: Phosphoribosylformylglycinamidine cyclo-ligase (338 aa).

This sequence belongs to the AIR synthase family.

It is found in the cytoplasm. It catalyses the reaction 2-formamido-N(1)-(5-O-phospho-beta-D-ribosyl)acetamidine + ATP = 5-amino-1-(5-phospho-beta-D-ribosyl)imidazole + ADP + phosphate + H(+). Its pathway is purine metabolism; IMP biosynthesis via de novo pathway; 5-amino-1-(5-phospho-D-ribosyl)imidazole from N(2)-formyl-N(1)-(5-phospho-D-ribosyl)glycinamide: step 2/2. This chain is Phosphoribosylformylglycinamidine cyclo-ligase, found in Thermoplasma volcanium (strain ATCC 51530 / DSM 4299 / JCM 9571 / NBRC 15438 / GSS1).